Consider the following 891-residue polypeptide: DNA mismatch repair protein MutS (891 aa).

An ATP-binding site is contributed by 634–641 (GPNMGGKS).

Belongs to the DNA mismatch repair MutS family.

In terms of biological role, this protein is involved in the repair of mismatches in DNA. It is possible that it carries out the mismatch recognition step. This protein has a weak ATPase activity. The chain is DNA mismatch repair protein MutS from Burkholderia pseudomallei (strain 1106a).